The chain runs to 108 residues: UPF0145 protein Tery_3795 (108 aa).

It belongs to the UPF0145 family.

The chain is UPF0145 protein Tery_3795 from Trichodesmium erythraeum (strain IMS101).